Consider the following 802-residue polypeptide: Acetyl-CoA decarbonylase/synthase complex subunit alpha (802 aa).

[4Fe-4S] cluster contacts are provided by cysteine 69, cysteine 72, cysteine 73, cysteine 75, cysteine 80, and cysteine 90. Histidine 113 is a CO binding site. [Ni-4Fe-4S] cluster is bound by residues histidine 246, cysteine 274, and cysteine 319. 4Fe-4S ferredoxin-type domains lie at 404–432 (EELKELADSCVHCLKCEVACPNSLPISEA) and 442–473 (SKFELLHDKCIACGRCEYACPKDIDIVNVIEK). Residues cysteine 413, cysteine 416, cysteine 419, cysteine 423, cysteine 451, cysteine 454, cysteine 457, and cysteine 461 each contribute to the [4Fe-4S] cluster site. Cysteine 519, cysteine 548, and cysteine 583 together coordinate [Ni-4Fe-4S] cluster.

This sequence belongs to the Ni-containing carbon monoxide dehydrogenase family. As to quaternary structure, heterotetramer of two alpha and two epsilon subunits. The ACDS complex is made up of alpha, epsilon, beta, gamma and delta subunits with a probable stoichiometry of (alpha(2)epsilon(2))(4)-beta(8)-(gamma(1)delta(1))(8). The cofactor is [4Fe-4S] cluster. [Ni-4Fe-4S] cluster serves as cofactor.

It carries out the reaction CO + 2 oxidized [2Fe-2S]-[ferredoxin] + H2O = 2 reduced [2Fe-2S]-[ferredoxin] + CO2 + 2 H(+). Its pathway is one-carbon metabolism; methanogenesis from acetate. Functionally, part of the ACDS complex that catalyzes the reversible cleavage of acetyl-CoA, allowing growth on acetate as sole source of carbon and energy. The alpha-epsilon subcomponent functions as a carbon monoxide dehydrogenase. The chain is Acetyl-CoA decarbonylase/synthase complex subunit alpha from Methanococcoides burtonii (strain DSM 6242 / NBRC 107633 / OCM 468 / ACE-M).